A 269-amino-acid polypeptide reads, in one-letter code: Tryptophan synthase alpha chain (269 aa).

Residues Glu49 and Asp60 each act as proton acceptor in the active site.

The protein belongs to the TrpA family. As to quaternary structure, tetramer of two alpha and two beta chains.

The catalysed reaction is (1S,2R)-1-C-(indol-3-yl)glycerol 3-phosphate + L-serine = D-glyceraldehyde 3-phosphate + L-tryptophan + H2O. The protein operates within amino-acid biosynthesis; L-tryptophan biosynthesis; L-tryptophan from chorismate: step 5/5. In terms of biological role, the alpha subunit is responsible for the aldol cleavage of indoleglycerol phosphate to indole and glyceraldehyde 3-phosphate. This chain is Tryptophan synthase alpha chain, found in Buchnera aphidicola subsp. Schlechtendalia chinensis.